Here is a 504-residue protein sequence, read N- to C-terminus: Maturase K (504 aa).

It belongs to the intron maturase 2 family. MatK subfamily.

The protein localises to the plastid. It localises to the chloroplast. Its function is as follows. Usually encoded in the trnK tRNA gene intron. Probably assists in splicing its own and other chloroplast group II introns. This Mentzelia laevicaulis (Blazing star) protein is Maturase K.